The sequence spans 242 residues: Segregation and condensation protein A (242 aa).

It belongs to the ScpA family. As to quaternary structure, component of a cohesin-like complex composed of ScpA, ScpB and the Smc homodimer, in which ScpA and ScpB bind to the head domain of Smc. The presence of the three proteins is required for the association of the complex with DNA.

It localises to the cytoplasm. Participates in chromosomal partition during cell division. May act via the formation of a condensin-like complex containing Smc and ScpB that pull DNA away from mid-cell into both cell halves. The polypeptide is Segregation and condensation protein A (Lactococcus lactis subsp. cremoris (strain MG1363)).